The sequence spans 629 residues: MTSQFAAELCELLVEENFGELFGRIFATLSRYDRLNLPRLKAYSELPNRQLLPALAAMIQQHLVYHYTSYDDGVTYYEANMQSAYYLVRSGKILEFVEERLGKYAATVLSTIMYLGHAQVSYLETLPELTSEAVKANGVPEEHGEHEEDEEQSNGLNGEHSNEQPELLHPTLKALAAHGYIIRVREAQFQSHADNILDAERAIRSKPEMKALKGKRLEEAVIEGTLGLLKERTDGDLTRGLIVHGVPRGAKRKHSSRRADEPNKKCRTDFASVDENDEHDEEEENEWSDDEMGYDTTPMEVSARELYATVSERETEQGVSPATAKVYECLLRRIEYQTHQCRDTAEIPREGEEGEQYSVPIALSALAEDVNPQLDLSSSTGPMDSSQPDGRRGKRPWDGDVEGTNHEEANGLSSGGSGGNRTFEIDQHLSLLAQPPHNLTSKRMVSGLITWTVEFRHLARKLRHLELERMIEARYGDVALRVVRVLHAKGKLDEKRLQEISLLPFKDLRQVLASMQAGGFVDLQEVPRDAQRQPSRTIYLWYYDPDRICNSVLQDTYKAMSRCLQRLRFERSRIKDFLEKTERSDVKGNEQRFLSEPELVLLEQWRAKEALLLGEVARLDEMVAVMRDY.

Disordered regions lie at residues alanine 136–glutamine 164, proline 247–tyrosine 294, and glutamine 373–asparagine 420. Positions arginine 257–threonine 268 are enriched in basic and acidic residues. Residues serine 272–glycine 293 are compositionally biased toward acidic residues. Polar residues predominate over residues leucine 374–proline 388. A compositionally biased stretch (basic and acidic residues) spans aspartate 389–alanine 409. The interval threonine 556–phenylalanine 577 is leucine-zipper.

This sequence belongs to the RNA polymerase beta chain family. In terms of assembly, component of the RNA polymerase III (Pol III) complex consisting of 17 subunits.

It is found in the nucleus. Its function is as follows. DNA-dependent RNA polymerase catalyzes the transcription of DNA into RNA using the four ribonucleoside triphosphates as substrates. Specific core component of RNA polymerase III which synthesizes small RNAs, such as 5S rRNA and tRNAs. The protein is DNA-directed RNA polymerase III subunit rpc3 (rpc82) of Aspergillus fumigatus (strain ATCC MYA-4609 / CBS 101355 / FGSC A1100 / Af293) (Neosartorya fumigata).